The chain runs to 261 residues: Imidazole glycerol phosphate synthase subunit HisF (261 aa).

Active-site residues include Asp-12 and Asp-131.

This sequence belongs to the HisA/HisF family. In terms of assembly, heterodimer of HisH and HisF.

The protein resides in the cytoplasm. The enzyme catalyses 5-[(5-phospho-1-deoxy-D-ribulos-1-ylimino)methylamino]-1-(5-phospho-beta-D-ribosyl)imidazole-4-carboxamide + L-glutamine = D-erythro-1-(imidazol-4-yl)glycerol 3-phosphate + 5-amino-1-(5-phospho-beta-D-ribosyl)imidazole-4-carboxamide + L-glutamate + H(+). It functions in the pathway amino-acid biosynthesis; L-histidine biosynthesis; L-histidine from 5-phospho-alpha-D-ribose 1-diphosphate: step 5/9. Functionally, IGPS catalyzes the conversion of PRFAR and glutamine to IGP, AICAR and glutamate. The HisF subunit catalyzes the cyclization activity that produces IGP and AICAR from PRFAR using the ammonia provided by the HisH subunit. This Brucella abortus (strain S19) protein is Imidazole glycerol phosphate synthase subunit HisF.